We begin with the raw amino-acid sequence, 180 residues long: uncharacterized protein (180 aa).

This is an uncharacterized protein from Dictyostelium discoideum (Social amoeba).